Reading from the N-terminus, the 348-residue chain is N-formyl peptide receptor 2 (348 aa).

Asn1 is a glycosylation site (N-linked (GlcNAc...) asparagine). At 1 to 24 the chain is on the extracellular side; the sequence is NFSTPLSEYEEVSYESAGYTVLQI. A helical membrane pass occupies residues 25 to 47; sequence LPLVVLGVTFVLGVLGNGLVIWV. At 48–58 the chain is on the cytoplasmic side; the sequence is AGFRMTRTVTT. A helical membrane pass occupies residues 59–80; that stretch reads ICYLNLALADFSFTATLPFLIV. Over 81 to 97 the chain is Extracellular; that stretch reads SMAMGEKWPFGWFLCKL. Cys95 and Cys173 are joined by a disulfide. The chain crosses the membrane as a helical span at residues 98–118; that stretch reads IHIVVDINLFGSVFLIGFIAL. Residues 119-137 lie on the Cytoplasmic side of the membrane; it reads DRCICVLHPVWAQNHRTVS. A helical membrane pass occupies residues 138–159; it reads LAMKVIVGPWILALVLTLPVFL. Residues 160 to 202 are Extracellular-facing; sequence FLTTVTIPNGDTYCTFNFASWGGTPEKRLKVAITMLTARGIIR. Residues 203–223 form a helical membrane-spanning segment; that stretch reads FVIGFSMPMSIVATCYGLIAA. At 224–239 the chain is on the cytoplasmic side; that stretch reads KIHKKGMIKSSRPLRV. A helical membrane pass occupies residues 240 to 263; that stretch reads LTAVVASFFICWFPFQLVALLSTV. At 264-283 the chain is on the extracellular side; sequence WLKEILVDGKYKIINILVNP. The chain crosses the membrane as a helical span at residues 284–303; the sequence is TSSLAFFNSCLNPMLYVFVG. The Cytoplasmic portion of the chain corresponds to 304 to 348; sequence QDFRERLIHSLPTSLERALSEDSAPTNDTAASCASPPAETELQAM. The tract at residues 322-348 is disordered; it reads LSEDSAPTNDTAASCASPPAETELQAM. Residues 326–335 are compositionally biased toward polar residues; the sequence is SAPTNDTAAS.

The protein belongs to the G-protein coupled receptor 1 family. In terms of assembly, interacts with APP; the interaction takes place at the cell surface and the complex is then rapidly internalized.

It is found in the cell membrane. Functionally, low affinity receptor for N-formyl-methionyl peptides, which are powerful neutrophil chemotactic factors. Binding of FMLP to the receptor causes activation of neutrophils. This response is mediated via a G-protein that activates a phosphatidylinositol-calcium second messenger system. Receptor for the chemokine-like protein FAM19A5, mediating FAM19A5-stimulated macrophage chemotaxis and the inhibitory effect on TNFSF11/RANKL-induced osteoclast differentiation. The polypeptide is N-formyl peptide receptor 2 (FPR2) (Macaca mulatta (Rhesus macaque)).